The primary structure comprises 487 residues: N-succinylglutamate 5-semialdehyde dehydrogenase (487 aa).

221-226 (GSSRTG) is an NAD(+) binding site. Residues Glu244 and Cys278 contribute to the active site.

Belongs to the aldehyde dehydrogenase family. AstD subfamily.

It catalyses the reaction N-succinyl-L-glutamate 5-semialdehyde + NAD(+) + H2O = N-succinyl-L-glutamate + NADH + 2 H(+). The protein operates within amino-acid degradation; L-arginine degradation via AST pathway; L-glutamate and succinate from L-arginine: step 4/5. In terms of biological role, catalyzes the NAD-dependent reduction of succinylglutamate semialdehyde into succinylglutamate. The protein is N-succinylglutamate 5-semialdehyde dehydrogenase of Pseudomonas putida (strain W619).